Reading from the N-terminus, the 210-residue chain is Kalata-B2 (210 aa).

The signal sequence occupies residues 1–22 (MAKFTNCLVLSLLLAAFVGAFG). Positions 23–66 (AEFSEADKATLVNDIAENIQKEILGEVKTSETVLTMFLKEMQLK) are excised as a propeptide. A cross-link (cyclopeptide (Gly-Asp)) is located at residues 67-95 (GLPVCGETCFGGTCNTPGCSCTWPICTRD). 3 disulfide bridges follow: Cys-71–Cys-85, Cys-75–Cys-87, and Cys-80–Cys-92. A propeptide spanning residues 96-120 (SLPMRAGGKTSETTLHMFLKEMQLK) is cleaved from the precursor. Residues 121–149 (GLPVCGETCFGGTCNTPGCSCTWPICTRD) constitute a cross-link (cyclopeptide (Gly-Asp)). Intrachain disulfides connect Cys-125-Cys-139, Cys-129-Cys-141, and Cys-134-Cys-146. Positions 150–174 (SLPMSAGGKTSETTLHMFLKEMQLK) are excised as a propeptide. The cyclopeptide (Gly-Asp) cross-link spans 175-203 (GLPVCGETCFGGTCNTPGCSCTWPICTRD). Cystine bridges form between Cys-179–Cys-193, Cys-183–Cys-195, and Cys-188–Cys-200. Residues 204-210 (SLPLVAA) constitute a propeptide that is removed on maturation.

The protein belongs to the cyclotide family. Moebius subfamily. Kalata-B2 is a cyclic peptide which occurs in three forms: with unmodified Trp, with Trp oxidized to form N-formylkynurenine and with Trp oxidized to form kynurenine. Oxidation is enhanced by exposure to sunlight.

Probably participates in a plant defense mechanism. Inhibitory effect on the growth and development of larvae from Helicoverpa punctigera. Has hemolytic activity. This chain is Kalata-B2 (OAK4), found in Oldenlandia affinis.